The sequence spans 378 residues: Erythronate-4-phosphate dehydrogenase (378 aa).

2 residues coordinate substrate: Ser-45 and Thr-66. Asp-146 and Thr-175 together coordinate NAD(+). The active site involves Arg-208. Asp-232 contributes to the NAD(+) binding site. The active site involves Glu-237. The Proton donor role is filled by His-254. Residue Gly-257 coordinates NAD(+). Tyr-258 contributes to the substrate binding site.

It belongs to the D-isomer specific 2-hydroxyacid dehydrogenase family. PdxB subfamily. Homodimer.

It is found in the cytoplasm. It catalyses the reaction 4-phospho-D-erythronate + NAD(+) = (R)-3-hydroxy-2-oxo-4-phosphooxybutanoate + NADH + H(+). It functions in the pathway cofactor biosynthesis; pyridoxine 5'-phosphate biosynthesis; pyridoxine 5'-phosphate from D-erythrose 4-phosphate: step 2/5. Its function is as follows. Catalyzes the oxidation of erythronate-4-phosphate to 3-hydroxy-2-oxo-4-phosphonooxybutanoate. The sequence is that of Erythronate-4-phosphate dehydrogenase from Salmonella paratyphi A (strain ATCC 9150 / SARB42).